The following is a 138-amino-acid chain: Acidic phospholipase A2 inhibitor vaspin A chain (138 aa).

Positions 1–16 are cleaved as a signal peptide; sequence MRTLWIVAVCLIGVEG. 7 cysteine pairs are disulfide-bonded: Cys42-Cys131, Cys44-Cys60, Cys59-Cys111, Cys65-Cys138, Cys66-Cys104, Cys73-Cys97, and Cys91-Cys102.

It belongs to the phospholipase A2 family. Group II subfamily. D49 sub-subfamily. As to quaternary structure, heterodimer of a toxic basic protein having phospholipase A2 activity (B chain (AC Q8JFG0)) and a non-toxic acidic protein functioning as its inhibitor (A chain). Expressed by the venom gland.

Its subcellular location is the secreted. Functionally, heterodimer: postsynaptic neurotoxin. Monomer: the acidic chain inhibits the basic phospholipase A2 of the complex. In Vipera aspis aspis (Aspic viper), this protein is Acidic phospholipase A2 inhibitor vaspin A chain.